Consider the following 389-residue polypeptide: MTNMAETKDTVQLRLLSLELLKQLWAGHEAMCQSVTRAASESNLDYSSSSNNLEMPLSQETSASSVAPNSQDKRHVWDPLDSHRGDTYDVAWYGKVNSRVDSLPPATCQHQEPQEGLRPSSVPLLATEGLKRPVSLGGPKGLGPDKAQVPRSLPLRLGKLSKPKVTFSQESSVPESSWYSRPCLDYDWTAGSLDSSSPVSSESEAYFSMLQRFREDNREDCVCNSPEAVFPELQESSGVEEDHECVYCYRINRRLFPEPLDPGAPCCLCGIPRDEQGPQTLVEPVQVRVSIPLSIMDPPHQYRIHRRKSFDASDTFALPRHCLLGWDILPPKSEKTSVPKSLDLWSSVSHGAAQRRNLSATNPSYQALRSRVPPPFWSEPQVARLCPSH.

The segment covering 44 to 54 has biased composition (low complexity); that stretch reads LDYSSSSNNLE. 2 disordered regions span residues 44 to 80 and 131 to 150; these read LDYS…WDPL and KRPV…AQVP. Residues 58 to 70 are compositionally biased toward polar residues; sequence SQETSASSVAPNS. Residues 71-80 are compositionally biased toward basic and acidic residues; it reads QDKRHVWDPL. Serine 309 bears the Phosphoserine mark.

As to quaternary structure, interacts with IGFBP2.

In terms of biological role, inhibits glioma cells invasion and down-regulates adhesion- and motility-associated genes such as NFKB2 and ICAM1. Exhibits opposing effects to IGFBP2 on cell invasion. This chain is Migration and invasion-inhibitory protein (Miip), found in Rattus norvegicus (Rat).